Reading from the N-terminus, the 405-residue chain is MDFRTYLKKYPDKNGRFGQYGGAYLTAELIPAFEEIADAYQTICHSSQFINELRRIRKEFQGRPTPVYHCERLSRAIGNCQIYLKREDLNHTGAHKLNHCMGEGLLAKFMGKKRLIAETGAGQHGVALATAAAFFGLECEIHMGEVDIAKQAPNVTRMKILGAKVVPVTHGLKTLKEAVDSAFDSYAKNYKDSIYCIGSALGPHPFPLMVRDFQAVVGYEAKDQFKEMTGFLPDVVTACVGGGSNAAGMFIPFLEEPVDIIGIEPLGRGEKLGDHAASMKYGEKGVMHGFESIMLKDKNGDPAPVYSIASGLDYPSVGPEHAFLRELGRVDYKVINDEEAMEAFFKLSRYEGIIPAIESSHAVAYAMKKAEEMKQGSILVCLSGRGDKDIDYIVEHYGYGEQYFK.

The residue at position 96 (K96) is an N6-(pyridoxal phosphate)lysine.

This sequence belongs to the TrpB family. As to quaternary structure, tetramer of two alpha and two beta chains. Pyridoxal 5'-phosphate serves as cofactor.

It carries out the reaction (1S,2R)-1-C-(indol-3-yl)glycerol 3-phosphate + L-serine = D-glyceraldehyde 3-phosphate + L-tryptophan + H2O. The protein operates within amino-acid biosynthesis; L-tryptophan biosynthesis; L-tryptophan from chorismate: step 5/5. In terms of biological role, the beta subunit is responsible for the synthesis of L-tryptophan from indole and L-serine. This is Tryptophan synthase beta chain from Clostridium botulinum (strain Eklund 17B / Type B).